The primary structure comprises 88 residues: Small ribosomal subunit protein uS15 (88 aa).

This sequence belongs to the universal ribosomal protein uS15 family. In terms of assembly, part of the 30S ribosomal subunit. Forms a bridge to the 50S subunit in the 70S ribosome, contacting the 23S rRNA.

Functionally, one of the primary rRNA binding proteins, it binds directly to 16S rRNA where it helps nucleate assembly of the platform of the 30S subunit by binding and bridging several RNA helices of the 16S rRNA. In terms of biological role, forms an intersubunit bridge (bridge B4) with the 23S rRNA of the 50S subunit in the ribosome. The sequence is that of Small ribosomal subunit protein uS15 from Desulfitobacterium hafniense (strain Y51).